The sequence spans 145 residues: Cell wall teichoic acid glycosylation protein GtcA (145 aa).

4 helical membrane-spanning segments follow: residues 21 to 41, 52 to 69, 96 to 116, and 121 to 141; these read ILMYLIMGGFTTLINIVTFWL, IANTIAWVASVLFAYFSN, FLTYLVDILVMILLIEVLSIN, and KIWTNVIVLVLNYVFSKWIIF.

Belongs to the GtrA family.

It localises to the cell membrane. In terms of biological role, involved in the decoration of cell wall teichoic acid with galactose and glucose. The sequence is that of Cell wall teichoic acid glycosylation protein GtcA (gtcA) from Listeria monocytogenes serovar 1/2a (strain ATCC BAA-679 / EGD-e).